Here is a 510-residue protein sequence, read N- to C-terminus: Fumarate hydratase, mitochondrial (510 aa).

Residues 1 to 44 constitute a mitochondrion transit peptide; the sequence is MYRALRLLARSRPLVRAPAAALASAPGLGGAAVPSFWPPNAARM. 3 positions are modified to N6-acetyllysine; alternate: Lys61, Lys66, and Lys80. Residues Lys61, Lys66, and Lys80 each carry the N6-succinyllysine; alternate modification. 2 positions are modified to phosphothreonine: Thr85 and Thr90. At Lys94 the chain carries N6-acetyllysine. Lys115 and Lys122 each carry N6-acetyllysine; alternate. An N6-succinyllysine; alternate mark is found at Lys115 and Lys122. Substrate-binding positions include 145-147, 176-179, and 186-188; these read SGT, HPND, and SSN. Lys213 bears the N6-acetyllysine mark. At Lys223 the chain carries N6-acetyllysine; alternate. Lys223 carries the N6-succinyllysine; alternate modification. Thr234 contributes to the substrate binding site. His235 functions as the Proton donor/acceptor in the catalytic mechanism. Residue Thr236 is modified to Phosphothreonine; by PRKDC. Lys256 carries the N6-acetyllysine modification. N6-acetyllysine; alternate is present on Lys292. An N6-succinyllysine; alternate modification is found at Lys292. Residue Ser365 is part of the active site. Residues Ser366 and 371 to 373 each bind substrate; that span reads KVN. At Ser366 the chain carries Phosphoserine. N6-succinyllysine occurs at positions 467 and 473. Lys502 bears the N6-acetyllysine mark.

The protein belongs to the class-II fumarase/aspartase family. Fumarase subfamily. As to quaternary structure, homotetramer. Interacts with H2AZ1. In terms of processing, phosphorylation at Thr-236 by PRKDC in response to DNA damage promotes translocation to the nucleus and recruitment to DNA double-strand breaks (DSBs). Expressed in red blood cells; underexpressed in red blood cells (cytoplasm) of patients with hereditary non-spherocytic hemolytic anemia of unknown etiology.

The protein resides in the mitochondrion. It is found in the cytoplasm. The protein localises to the cytosol. It localises to the nucleus. Its subcellular location is the chromosome. The catalysed reaction is (S)-malate = fumarate + H2O. The protein operates within carbohydrate metabolism; tricarboxylic acid cycle; (S)-malate from fumarate: step 1/1. Catalyzes the reversible stereospecific interconversion of fumarate to L-malate. Experiments in other species have demonstrated that specific isoforms of this protein act in defined pathways and favor one direction over the other. In terms of biological role, catalyzes the hydration of fumarate to L-malate in the tricarboxylic acid (TCA) cycle to facilitate a transition step in the production of energy in the form of NADH. Its function is as follows. Catalyzes the dehydration of L-malate to fumarate. Fumarate metabolism in the cytosol plays a role during urea cycle and arginine metabolism; fumarate being a by-product of the urea cycle and amino-acid catabolism. Also plays a role in DNA repair by promoting non-homologous end-joining (NHEJ). In response to DNA damage and phosphorylation by PRKDC, translocates to the nucleus and accumulates at DNA double-strand breaks (DSBs): acts by catalyzing formation of fumarate, an inhibitor of KDM2B histone demethylase activity, resulting in enhanced dimethylation of histone H3 'Lys-36' (H3K36me2). This Homo sapiens (Human) protein is Fumarate hydratase, mitochondrial.